The following is a 346-amino-acid chain: Cyclin-dependent kinase 20 (346 aa).

Residues 4–288 (YCILGRIGEG…ASQALLHQYF (285 aa)) enclose the Protein kinase domain. Residues 10 to 18 (IGEGAHGIV) and Lys-33 each bind ATP. Asp-127 (proton acceptor) is an active-site residue. A disordered region spans residues 298–324 (SELPIPQRPGGPTPKAHPGPPHVHDFH). Over residues 303–318 (PQRPGGPTPKAHPGPP) the composition is skewed to pro residues.

The protein belongs to the protein kinase superfamily. CMGC Ser/Thr protein kinase family. CDC2/CDKX subfamily. As to quaternary structure, monomer. Interacts with TBC1D32 and MAK.

The protein localises to the nucleus. It is found in the cytoplasm. The protein resides in the cell projection. Its subcellular location is the cilium. The enzyme catalyses L-seryl-[protein] + ATP = O-phospho-L-seryl-[protein] + ADP + H(+). It carries out the reaction L-threonyl-[protein] + ATP = O-phospho-L-threonyl-[protein] + ADP + H(+). Its function is as follows. Required for high-level Shh responses in the developing neural tube. Together with TBC1D32, controls the structure of the primary cilium by coordinating assembly of the ciliary membrane and axoneme, allowing GLI2 to be properly activated in response to SHH signaling. Involved in cell growth. Activates CDK2, a kinase involved in the control of the cell cycle, by phosphorylating residue 'Thr-160'. This is Cyclin-dependent kinase 20 (Cdk20) from Rattus norvegicus (Rat).